Consider the following 706-residue polypeptide: Polyribonucleotide nucleotidyltransferase (706 aa).

Mg(2+)-binding residues include Asp-486 and Asp-492. Positions 553–612 (PRIHTIKISTDKIKDVIGKGGSVIRALTEETGTTIEIEDDGTVRIASTDGEKAKHAIRRI) constitute a KH domain. Residues 622–690 (GRVYQGKVTR…RQGRVRLSIK (69 aa)) enclose the S1 motif domain.

It belongs to the polyribonucleotide nucleotidyltransferase family. In terms of assembly, component of the RNA degradosome, which is a multiprotein complex involved in RNA processing and mRNA degradation. Mg(2+) serves as cofactor.

It is found in the cytoplasm. It catalyses the reaction RNA(n+1) + phosphate = RNA(n) + a ribonucleoside 5'-diphosphate. In terms of biological role, involved in mRNA degradation. Catalyzes the phosphorolysis of single-stranded polyribonucleotides processively in the 3'- to 5'-direction. The protein is Polyribonucleotide nucleotidyltransferase of Pectobacterium atrosepticum (strain SCRI 1043 / ATCC BAA-672) (Erwinia carotovora subsp. atroseptica).